Consider the following 162-residue polypeptide: Putative 4-hydroxy-4-methyl-2-oxoglutarate aldolase (162 aa).

Substrate-binding positions include 75–78 and arginine 97; that span reads GDML. Aspartate 98 is a binding site for a divalent metal cation.

The protein belongs to the class II aldolase/RraA-like family. In terms of assembly, homotrimer. It depends on a divalent metal cation as a cofactor.

It carries out the reaction 4-hydroxy-4-methyl-2-oxoglutarate = 2 pyruvate. The catalysed reaction is oxaloacetate + H(+) = pyruvate + CO2. In terms of biological role, catalyzes the aldol cleavage of 4-hydroxy-4-methyl-2-oxoglutarate (HMG) into 2 molecules of pyruvate. Also contains a secondary oxaloacetate (OAA) decarboxylase activity due to the common pyruvate enolate transition state formed following C-C bond cleavage in the retro-aldol and decarboxylation reactions. The protein is Putative 4-hydroxy-4-methyl-2-oxoglutarate aldolase of Pseudomonas paraeruginosa (strain DSM 24068 / PA7) (Pseudomonas aeruginosa (strain PA7)).